A 325-amino-acid chain; its full sequence is uncharacterized protein (325 aa).

Positions Gln296–Ala325 are disordered.

The protein belongs to the NDRG family.

This is an uncharacterized protein from Caenorhabditis elegans.